Reading from the N-terminus, the 371-residue chain is Histidinol-phosphate aminotransferase (371 aa).

Lys229 carries the N6-(pyridoxal phosphate)lysine modification.

It belongs to the class-II pyridoxal-phosphate-dependent aminotransferase family. Histidinol-phosphate aminotransferase subfamily. In terms of assembly, homodimer. The cofactor is pyridoxal 5'-phosphate.

The catalysed reaction is L-histidinol phosphate + 2-oxoglutarate = 3-(imidazol-4-yl)-2-oxopropyl phosphate + L-glutamate. It functions in the pathway amino-acid biosynthesis; L-histidine biosynthesis; L-histidine from 5-phospho-alpha-D-ribose 1-diphosphate: step 7/9. This Roseiflexus castenholzii (strain DSM 13941 / HLO8) protein is Histidinol-phosphate aminotransferase.